Here is a 714-residue protein sequence, read N- to C-terminus: DNA ligase (714 aa).

NAD(+)-binding positions include 47-51, 96-97, and Glu128; these read DAEYD and SL. Residue Lys130 is the N6-AMP-lysine intermediate of the active site. 4 residues coordinate NAD(+): Arg151, Glu188, Lys306, and Lys330. Residues Cys435, Cys438, Cys453, and Cys459 each contribute to the Zn(2+) site. A BRCT domain is found at 637 to 714; sequence RRDTAVAGKT…TEDEWLALIS (78 aa).

It belongs to the NAD-dependent DNA ligase family. LigA subfamily. It depends on Mg(2+) as a cofactor. The cofactor is Mn(2+).

The enzyme catalyses NAD(+) + (deoxyribonucleotide)n-3'-hydroxyl + 5'-phospho-(deoxyribonucleotide)m = (deoxyribonucleotide)n+m + AMP + beta-nicotinamide D-nucleotide.. Its function is as follows. DNA ligase that catalyzes the formation of phosphodiester linkages between 5'-phosphoryl and 3'-hydroxyl groups in double-stranded DNA using NAD as a coenzyme and as the energy source for the reaction. It is essential for DNA replication and repair of damaged DNA. This chain is DNA ligase, found in Rhodopseudomonas palustris (strain HaA2).